The following is an 800-amino-acid chain: Phenylalanine--tRNA ligase beta subunit (800 aa).

The tRNA-binding domain maps to Phe39–Val147. Positions Trp401 to Pro477 constitute a B5 domain. Mg(2+)-binding residues include Asp455, Asp461, Glu464, and Glu465. The FDX-ACB domain maps to Pro706 to Ile800.

Belongs to the phenylalanyl-tRNA synthetase beta subunit family. Type 1 subfamily. In terms of assembly, tetramer of two alpha and two beta subunits. Requires Mg(2+) as cofactor.

It localises to the cytoplasm. The enzyme catalyses tRNA(Phe) + L-phenylalanine + ATP = L-phenylalanyl-tRNA(Phe) + AMP + diphosphate + H(+). The polypeptide is Phenylalanine--tRNA ligase beta subunit (Oleidesulfovibrio alaskensis (strain ATCC BAA-1058 / DSM 17464 / G20) (Desulfovibrio alaskensis)).